Here is a 1039-residue protein sequence, read N- to C-terminus: RNA-binding protein Unr (1039 aa).

Positions 49–62 are enriched in polar residues; the sequence is TTLGLQPQGQGPSP. Disordered stretches follow at residues 49-126 and 165-184; these read TTLG…QQQH and SIFG…PSQT. 3 stretches are compositionally biased toward low complexity: residues 63 to 80, 89 to 126, and 165 to 182; these read QQQQ…QHQQ, QQHM…QQQH, and SIFG…ADPS. Positions 186-250 constitute a CSD 1 domain; the sequence is RETGIIEKLL…GKPIASQVSK (65 aa). Residues 261 to 337 form the CSD 2; degenerate domain; sequence RVTGTVTTEL…GNLGACHIRL (77 aa). The region spanning 345–413 is the CSD 3 domain; it reads KYRGVVCSMK…GREFACNITR (69 aa). Residues 428–503 enclose the CSD 4; degenerate domain; the sequence is VYKGQVLKSL…RDQLQRATSI (76 aa). The 69-residue stretch at 517-585 folds into the CSD 5 domain; the sequence is REQGTIASLK…SRLQAIRIKH (69 aa). A CSD 6; degenerate domain is found at 593–673; sequence FETLVASNIE…KECIAVNVQQ (81 aa). The tract at residues 721–741 is disordered; it reads QNGYVMHGSPGGSTSSVGSNN. Low complexity predominate over residues 732 to 741; the sequence is GSTSSVGSNN. A CSD 7 domain is found at 763–831; that stretch reads VYRGFIAVMK…NCLPAENVRM (69 aa). A CSD 8; degenerate domain is found at 846–919; it reads THNGVVARPL…SGRAACVNAV (74 aa). Residues 922–987 form the CSD 9 domain; the sequence is KKRATVDSIK…GKSSACNVLK (66 aa).

Belongs to the UNR family. In terms of assembly, interacts with Sxl; cooperates with Sxl to prevent translation of msl-2 transcripts. Interacts with mle; promoting association between mle and roX2 non-coding RNA. Interacts (via CSD domain 7-9) with pAbp; promoting translation inhibition of msl-2 transcripts.

It is found in the cytoplasm. Functionally, RNA-binding protein that acts as a regulator of dosage compensation in both males and females. In males, acts as positive regulator of dosage compensation by promoting assembly of the MSL complex, a multiprotein complex that mediates X-chromosome dosage compensation. Promotes MSL complex assembly via association with roX1 and roX2 non-coding RNA components of the MSL complex, facilitating the interaction between non-coding RNAs and mle. In females, acts as an inhibitor of dosage compensation together with Sxl by preventing production of msl-2 protein, an essential component of the MSL complex. Specifically binds to the 3'-UTR of msl-2 transcripts, and cooperates with Sxl to prevent translation initiation of msl-2 transcripts. Mechanistically, Sxl and Unr inhibit translation initiation by preventing ribosome recruitment after pAbp-mediated recruitment of the eIF4F complex. In Drosophila melanogaster (Fruit fly), this protein is RNA-binding protein Unr.